The sequence spans 347 residues: MDYKTSGVDIEAGREFVSEIKQAVEGTHTSNVIDGIGGFGGLFRIPVDSFKKPVLVSGTDGVGTKLELAQSKNFHFEVGIDLVAMCMNDIITCGAKPLFFLDYIATGKLDKKQLLQVVQGISHGCGENNCSLLGGETAEMPGFYSNNKYDLAGFCVGIVDEDKLINGKKISENDLIIALKSNGVHSNGFSLVRKIIQNNNQLDKEFEKVSHLNFYDELLKPTKIYNNVVNQILSENIEIKAMSHITGGGIPENLPRCIPSDFIPYINTNSWEIPILFKFLKEKGTIPEKDFWNTFNLGVGFCLIIDKQFKDSILNICKDHDIDSWEIGKIVRKNDSTISKFLPEILT.

This sequence belongs to the AIR synthase family.

It localises to the cytoplasm. The catalysed reaction is 2-formamido-N(1)-(5-O-phospho-beta-D-ribosyl)acetamidine + ATP = 5-amino-1-(5-phospho-beta-D-ribosyl)imidazole + ADP + phosphate + H(+). Its pathway is purine metabolism; IMP biosynthesis via de novo pathway; 5-amino-1-(5-phospho-D-ribosyl)imidazole from N(2)-formyl-N(1)-(5-phospho-D-ribosyl)glycinamide: step 2/2. The sequence is that of Phosphoribosylformylglycinamidine cyclo-ligase from Prochlorococcus marinus (strain MIT 9312).